The following is a 158-amino-acid chain: Transcriptional repressor NrdR (158 aa).

A zinc finger lies at 3–34; it reads CPYCGFEESKVVDSRSTEDHKAIRRRRECLKC. The 91-residue stretch at 49 to 139 folds into the ATP-cone domain; it reads VLVIKRDSNR…VYRQFKDINT (91 aa).

The protein belongs to the NrdR family. Zn(2+) is required as a cofactor.

Negatively regulates transcription of bacterial ribonucleotide reductase nrd genes and operons by binding to NrdR-boxes. This Clostridium novyi (strain NT) protein is Transcriptional repressor NrdR.